A 365-amino-acid polypeptide reads, in one-letter code: 1-aminocyclopropane-1-carboxylate oxidase homolog 9 (365 aa).

Residues 214–313 (KGLLMLCHYY…RISVACFVSS (100 aa)) enclose the Fe2OG dioxygenase domain. The Fe cation site is built by histidine 238, aspartate 240, and histidine 294. Arginine 304 is a binding site for 2-oxoglutarate.

Belongs to the iron/ascorbate-dependent oxidoreductase family. The cofactor is Fe(2+).

The chain is 1-aminocyclopropane-1-carboxylate oxidase homolog 9 from Arabidopsis thaliana (Mouse-ear cress).